Here is a 606-residue protein sequence, read N- to C-terminus: Membrane protein insertase YidC (606 aa).

A helical transmembrane segment spans residues 8 to 28 (LILATALSFIVILVWFVLFPP). The disordered stretch occupies residues 33–59 (MPLTGETSTELTPDAATGSLPSVTSDT). 6 helical membrane-spanning segments follow: residues 116-136 (IVTM…YGWA), 348-368 (FIDS…FFLL), 374-394 (FIGN…AILL), 448-468 (LPIL…FVTI), 506-526 (SIMA…SMWL), and 542-562 (IFAW…SGLV).

It belongs to the OXA1/ALB3/YidC family. Type 1 subfamily. In terms of assembly, interacts with the Sec translocase complex via SecD. Specifically interacts with transmembrane segments of nascent integral membrane proteins during membrane integration.

It is found in the cell inner membrane. Required for the insertion and/or proper folding and/or complex formation of integral membrane proteins into the membrane. Involved in integration of membrane proteins that insert both dependently and independently of the Sec translocase complex, as well as at least some lipoproteins. Aids folding of multispanning membrane proteins. The chain is Membrane protein insertase YidC from Roseobacter denitrificans (strain ATCC 33942 / OCh 114) (Erythrobacter sp. (strain OCh 114)).